Here is a 553-residue protein sequence, read N- to C-terminus: Phosphoglucomutase (553 aa).

Positions Met1–Lys25 are disordered. The span at Ser11–Thr20 shows a compositional bias: polar residues. Substrate contacts are provided by residues Thr20, Arg24, Ser117 to His118, and Lys131. The Phosphoserine intermediate role is filled by Ser117. Residue Ser117 participates in Mg(2+) binding. Asp289, Asp291, and Asp293 together coordinate Mg(2+). Substrate-binding positions include Asp293–Arg294, Thr352, Glu371–Ser373, Lys384, and Arg509.

The protein belongs to the phosphohexose mutase family. Requires Mg(2+) as cofactor.

It is found in the cytoplasm. It carries out the reaction alpha-D-glucose 1-phosphate = alpha-D-glucose 6-phosphate. Catalyzes the reversible conversion of glucose 1-phosphate into glucose 6-phosphate. This enzyme participates in both the breakdown and synthesis of glucose. The polypeptide is Phosphoglucomutase (Entamoeba histolytica (strain ATCC 30459 / HM-1:IMSS / ABRM)).